We begin with the raw amino-acid sequence, 209 residues long: Thymidylate kinase (209 aa).

An ATP-binding site is contributed by 7-14 (GVEGSGKS).

This sequence belongs to the thymidylate kinase family.

The catalysed reaction is dTMP + ATP = dTDP + ADP. In terms of biological role, phosphorylation of dTMP to form dTDP in both de novo and salvage pathways of dTTP synthesis. In Solidesulfovibrio magneticus (strain ATCC 700980 / DSM 13731 / RS-1) (Desulfovibrio magneticus), this protein is Thymidylate kinase.